The sequence spans 396 residues: 1-deoxy-D-xylulose 5-phosphate reductoisomerase (396 aa).

6 residues coordinate NADPH: threonine 15, glycine 16, serine 17, isoleucine 18, glycine 41, and asparagine 130. Lysine 131 provides a ligand contact to 1-deoxy-D-xylulose 5-phosphate. Glutamate 132 is an NADPH binding site. Aspartate 155 lines the Mn(2+) pocket. 1-deoxy-D-xylulose 5-phosphate contacts are provided by serine 156, glutamate 157, serine 181, and histidine 204. Glutamate 157 contacts Mn(2+). Glycine 210 provides a ligand contact to NADPH. 1-deoxy-D-xylulose 5-phosphate-binding residues include serine 217, asparagine 222, lysine 223, and glutamate 226. Glutamate 226 lines the Mn(2+) pocket.

The protein belongs to the DXR family. It depends on Mg(2+) as a cofactor. Requires Mn(2+) as cofactor.

It catalyses the reaction 2-C-methyl-D-erythritol 4-phosphate + NADP(+) = 1-deoxy-D-xylulose 5-phosphate + NADPH + H(+). The protein operates within isoprenoid biosynthesis; isopentenyl diphosphate biosynthesis via DXP pathway; isopentenyl diphosphate from 1-deoxy-D-xylulose 5-phosphate: step 1/6. Its function is as follows. Catalyzes the NADPH-dependent rearrangement and reduction of 1-deoxy-D-xylulose-5-phosphate (DXP) to 2-C-methyl-D-erythritol 4-phosphate (MEP). The polypeptide is 1-deoxy-D-xylulose 5-phosphate reductoisomerase (Bifidobacterium longum (strain NCC 2705)).